Here is a 234-residue protein sequence, read N- to C-terminus: Orotidine 5'-phosphate decarboxylase (234 aa).

Residues aspartate 10, lysine 31, 58–67 (DLKLHDIPNT), threonine 121, arginine 183, glutamine 192, glycine 212, and arginine 213 each bind substrate. Lysine 60 serves as the catalytic Proton donor.

It belongs to the OMP decarboxylase family. Type 1 subfamily. Homodimer.

It carries out the reaction orotidine 5'-phosphate + H(+) = UMP + CO2. It functions in the pathway pyrimidine metabolism; UMP biosynthesis via de novo pathway; UMP from orotate: step 2/2. Catalyzes the decarboxylation of orotidine 5'-monophosphate (OMP) to uridine 5'-monophosphate (UMP). In Lysinibacillus sphaericus (strain C3-41), this protein is Orotidine 5'-phosphate decarboxylase.